The primary structure comprises 360 residues: UDP-N-acetylglucosamine--N-acetylmuramyl-(pentapeptide) pyrophosphoryl-undecaprenol N-acetylglucosamine transferase (360 aa).

Residues 13-15 (TGG), Asn125, Arg164, Ser191, and Gln290 contribute to the UDP-N-acetyl-alpha-D-glucosamine site.

It belongs to the glycosyltransferase 28 family. MurG subfamily.

The protein resides in the cell inner membrane. The enzyme catalyses di-trans,octa-cis-undecaprenyl diphospho-N-acetyl-alpha-D-muramoyl-L-alanyl-D-glutamyl-meso-2,6-diaminopimeloyl-D-alanyl-D-alanine + UDP-N-acetyl-alpha-D-glucosamine = di-trans,octa-cis-undecaprenyl diphospho-[N-acetyl-alpha-D-glucosaminyl-(1-&gt;4)]-N-acetyl-alpha-D-muramoyl-L-alanyl-D-glutamyl-meso-2,6-diaminopimeloyl-D-alanyl-D-alanine + UDP + H(+). The protein operates within cell wall biogenesis; peptidoglycan biosynthesis. Functionally, cell wall formation. Catalyzes the transfer of a GlcNAc subunit on undecaprenyl-pyrophosphoryl-MurNAc-pentapeptide (lipid intermediate I) to form undecaprenyl-pyrophosphoryl-MurNAc-(pentapeptide)GlcNAc (lipid intermediate II). This chain is UDP-N-acetylglucosamine--N-acetylmuramyl-(pentapeptide) pyrophosphoryl-undecaprenol N-acetylglucosamine transferase, found in Hahella chejuensis (strain KCTC 2396).